The following is a 225-amino-acid chain: Cell division protein SepF (225 aa).

The interval 21-134 is disordered; that stretch reads DEYLDEPEPT…GPLFDEGGPL (114 aa). Basic and acidic residues-rich tracts occupy residues 28–54, 77–86, and 115–127; these read EPTR…RDFA, RYESPRHSSR, and TRSD…RGPL.

The protein belongs to the SepF family. As to quaternary structure, homodimer. Interacts with FtsZ.

The protein resides in the cytoplasm. Its function is as follows. Cell division protein that is part of the divisome complex and is recruited early to the Z-ring. Probably stimulates Z-ring formation, perhaps through the cross-linking of FtsZ protofilaments. Its function overlaps with FtsA. The protein is Cell division protein SepF of Rhodococcus opacus (strain B4).